The sequence spans 311 residues: Small ribosomal subunit protein uS3 (311 aa).

The KH type-2 domain occupies 17-86; the sequence is MDEYFAEQLN…NPQIDAQEVK (70 aa). The segment at 190–267 is disordered; that stretch reads PDSYTTTEPS…EPQAEVAEDL (78 aa). The span at 194 to 204 shows a compositional bias: low complexity; it reads TTTEPSEPVTE. A compositionally biased stretch (basic and acidic residues) spans 205-231; that stretch reads PVEKPAEKPAAKPAEKPVEAPKKESAA. Over residues 232-247 the composition is skewed to low complexity; the sequence is KPKTPAVAPEKPVETA. The span at 248–267 shows a compositional bias: acidic residues; it reads EVAEPEEAEEEPQAEVAEDL.

Belongs to the universal ribosomal protein uS3 family. As to quaternary structure, part of the 30S ribosomal subunit.

Functionally, binds the lower part of the 30S subunit head. This Methanosarcina barkeri (strain Fusaro / DSM 804) protein is Small ribosomal subunit protein uS3.